The following is a 297-amino-acid chain: Phosphatidylserine decarboxylase proenzyme (297 aa).

Catalysis depends on charge relay system; for autoendoproteolytic cleavage activity residues Asp-112, His-168, and Ser-255. The Schiff-base intermediate with substrate; via pyruvic acid; for decarboxylase activity role is filled by Ser-255. The residue at position 255 (Ser-255) is a Pyruvic acid (Ser); by autocatalysis.

It belongs to the phosphatidylserine decarboxylase family. PSD-B subfamily. Prokaryotic type II sub-subfamily. As to quaternary structure, heterodimer of a large membrane-associated beta subunit and a small pyruvoyl-containing alpha subunit. Requires pyruvate as cofactor. Post-translationally, is synthesized initially as an inactive proenzyme. Formation of the active enzyme involves a self-maturation process in which the active site pyruvoyl group is generated from an internal serine residue via an autocatalytic post-translational modification. Two non-identical subunits are generated from the proenzyme in this reaction, and the pyruvate is formed at the N-terminus of the alpha chain, which is derived from the carboxyl end of the proenzyme. The autoendoproteolytic cleavage occurs by a canonical serine protease mechanism, in which the side chain hydroxyl group of the serine supplies its oxygen atom to form the C-terminus of the beta chain, while the remainder of the serine residue undergoes an oxidative deamination to produce ammonia and the pyruvoyl prosthetic group on the alpha chain. During this reaction, the Ser that is part of the protease active site of the proenzyme becomes the pyruvoyl prosthetic group, which constitutes an essential element of the active site of the mature decarboxylase.

It localises to the cell membrane. The catalysed reaction is a 1,2-diacyl-sn-glycero-3-phospho-L-serine + H(+) = a 1,2-diacyl-sn-glycero-3-phosphoethanolamine + CO2. It functions in the pathway phospholipid metabolism; phosphatidylethanolamine biosynthesis; phosphatidylethanolamine from CDP-diacylglycerol: step 2/2. In terms of biological role, catalyzes the formation of phosphatidylethanolamine (PtdEtn) from phosphatidylserine (PtdSer). The protein is Phosphatidylserine decarboxylase proenzyme of Clostridium tetani (strain Massachusetts / E88).